Reading from the N-terminus, the 37-residue chain is MSDIN-like toxin proprotein 5 (37 aa).

Residues 1–10 constitute a propeptide that is removed on maturation; sequence MSDINATRLP. Positions 11 to 20 form a cross-link, cyclopeptide (Leu-Pro); it reads LFFPPDFRPP. Positions 21 to 37 are excised as a propeptide; it reads CVGDADNFTLTRGENLC.

It belongs to the MSDIN fungal toxin family. In terms of processing, processed by the macrocyclase-peptidase enzyme POPB to yield a toxic cyclic decapeptide. POPB first removes 10 residues from the N-terminus. Conformational trapping of the remaining peptide forces the enzyme to release this intermediate rather than proceed to macrocyclization. The enzyme rebinds the remaining peptide in a different conformation and catalyzes macrocyclization of the N-terminal 10 residues. In terms of tissue distribution, expressed in basidiocarps.

In terms of biological role, probable toxin that belongs to the MSDIN-like toxin family responsible for a large number of food poisoning cases and deaths. This is MSDIN-like toxin proprotein 5 from Amanita exitialis (Guangzhou destroying angel).